Reading from the N-terminus, the 398-residue chain is uncharacterized protein (398 aa).

It belongs to the class-V pyridoxal-phosphate-dependent aminotransferase family. As to quaternary structure, homodimer.

Functionally, is essential for optimal growth. This is an uncharacterized protein from Mycobacterium tuberculosis (strain CDC 1551 / Oshkosh).